We begin with the raw amino-acid sequence, 106 residues long: Iron-sulfur cluster assembly protein CyaY (106 aa).

The protein belongs to the frataxin family.

Functionally, involved in iron-sulfur (Fe-S) cluster assembly. May act as a regulator of Fe-S biogenesis. The chain is Iron-sulfur cluster assembly protein CyaY from Escherichia coli O7:K1 (strain IAI39 / ExPEC).